We begin with the raw amino-acid sequence, 204 residues long: Putative F-box protein L168 (204 aa).

Residues 1–46 form the F-box domain; sequence MNLCDLFDEIIIGIIDELSDRDKIKFMTTCSRFYYFIDKTKYFDIY. The interval 161–184 is disordered; that stretch reads NETNKITNNHTNKKINNNKKHQNN. The span at 171 to 183 shows a compositional bias: basic residues; it reads TNKKINNNKKHQN.

This chain is Putative F-box protein L168, found in Acanthamoeba polyphaga (Amoeba).